The following is a 508-amino-acid chain: General transcription factor IIF subunit 1 (508 aa).

Ala2 is modified (N-acetylalanine). At Thr156 the chain carries Phosphothreonine. Residues 177 to 448 (MQQRRLKDQD…SSGDVQVTED (272 aa)) form a disordered region. Phosphoserine is present on residues Ser217, Ser218, Ser221, and Ser224. Basic residues predominate over residues 232 to 251 (SKAKKKAPVTKAGRKKKKKK). Acidic residues-rich tracts occupy residues 255-270 (DEAF…EGQE) and 303-325 (EQSE…EEEE). A Phosphothreonine modification is found at Thr331. Acidic residues predominate over residues 343–355 (DDSDSSEESDIDS). Positions 364–374 (AKKKTPPKRER) are enriched in basic residues. Phosphoserine occurs at positions 377, 380, 381, and 385. The segment covering 378-388 (GGSSKGTSRPG) has biased composition (polar residues). Thr389 carries the post-translational modification Phosphothreonine. Low complexity predominate over residues 389-406 (TPSAEAASTSSTLRAAAS). Ser391 carries the post-translational modification Phosphoserine. Position 407 is an N6-acetyllysine (Lys407). Over residues 428-443 (GPQSLSGKSTPSSGDV) the composition is skewed to polar residues. 3 positions are modified to phosphoserine: Ser431, Ser433, and Ser436. Thr437 bears the Phosphothreonine mark. The residue at position 440 (Ser440) is a Phosphoserine.

The protein belongs to the TFIIF alpha subunit family. In terms of assembly, heterodimer of an alpha and a beta subunit. Interacts with GTF2F2, CTDP1, TAF6/TAFII80 and URI1. Interacts with GTF2B (via C-terminus and preferentially via acetylated form); this interaction prevents binding of GTF2B to GTF2F2. Part of TBP-based Pol II pre-initiation complex (PIC), in which Pol II core assembles with general transcription factors and other specific initiation factors including GTF2E1, GTF2E2, GTF2F1, GTF2F2, TCEA1, ERCC2, ERCC3, GTF2H2, GTF2H3, GTF2H4, GTF2H5, GTF2A1, GTF2A2, GTF2B and TBP; this large multi-subunit PIC complex mediates DNA unwinding and targets Pol II core to the transcription start site where the first phosphodiester bond forms. In terms of processing, phosphorylated on Ser and other residues by TAF1 and casein kinase II-like kinases.

It localises to the nucleus. In terms of biological role, TFIIF is a general transcription initiation factor that binds to RNA polymerase II and helps to recruit it to the initiation complex in collaboration with TFIIB. It promotes transcription elongation. This is General transcription factor IIF subunit 1 (Gtf2f1) from Rattus norvegicus (Rat).